Here is a 258-residue protein sequence, read N- to C-terminus: Transcriptional repressor AccR (258 aa).

One can recognise an HTH deoR-type domain in the interval 6–61 (TQDRQAKIVELLRDEQFLAIGRLTEHFQISVATARRDLSELHEAGLLRRTHGGAVS). Positions 23–42 (LAIGRLTEHFQISVATARRD) form a DNA-binding region, H-T-H motif.

In terms of biological role, represses opine catabolism and conjugal transfer of the nopaline Ti plasmid pTiC58. This chain is Transcriptional repressor AccR (accR), found in Agrobacterium fabrum (strain C58 / ATCC 33970) (Agrobacterium tumefaciens (strain C58)).